Here is a 401-residue protein sequence, read N- to C-terminus: S-adenosylmethionine synthase (401 aa).

Position 16 (histidine 16) interacts with ATP. Aspartate 18 contacts Mg(2+). Glutamate 44 serves as a coordination point for K(+). Residues glutamate 57 and glutamine 100 each contribute to the L-methionine site. Positions 100–110 (QSPDIAQGVNE) are flexible loop. ATP is bound by residues 174 to 176 (DAK), 241 to 242 (RF), aspartate 250, 256 to 257 (RK), alanine 273, and lysine 277. An L-methionine-binding site is contributed by aspartate 250. An L-methionine-binding site is contributed by lysine 281.

This sequence belongs to the AdoMet synthase family. In terms of assembly, homotetramer; dimer of dimers. The cofactor is Mg(2+). Requires K(+) as cofactor.

It is found in the cytoplasm. The enzyme catalyses L-methionine + ATP + H2O = S-adenosyl-L-methionine + phosphate + diphosphate. It functions in the pathway amino-acid biosynthesis; S-adenosyl-L-methionine biosynthesis; S-adenosyl-L-methionine from L-methionine: step 1/1. Functionally, catalyzes the formation of S-adenosylmethionine (AdoMet) from methionine and ATP. The overall synthetic reaction is composed of two sequential steps, AdoMet formation and the subsequent tripolyphosphate hydrolysis which occurs prior to release of AdoMet from the enzyme. The protein is S-adenosylmethionine synthase of Streptococcus equi subsp. zooepidemicus (strain H70).